The primary structure comprises 540 residues: Terminase large subunit (540 aa).

Mn(2+) is bound by residues aspartate 352, aspartate 424, and aspartate 523.

This sequence belongs to the skunavirus terminase large subunit family. In terms of assembly, interacts with the terminase small subunit; the active complex is probably heterooligomeric. It depends on Mn(2+) as a cofactor. Mg(2+) is required as a cofactor.

The terminase large subunit acts as an ATP driven molecular motor necessary for viral DNA translocation into empty capsids and as an endonuclease that cuts the viral genome to initiate and to end a packaging reaction. The terminase lies at a unique vertex of the procapsid and is composed of two subunits, a small terminase subunit involved in viral DNA recognition (packaging sequence), and a large terminase subunit possessing endonucleolytic and ATPase activities. Both terminase subunits heterooligomerize and are docked on the portal protein to form the packaging machine. The terminase large subunit exhibits endonuclease activity and cleaves the viral genome concatemer. The sequence is that of Terminase large subunit from Lactococcus lactis (Lactococcus lactis bacteriophage SK1).